Here is an 876-residue protein sequence, read N- to C-terminus: Alanine--tRNA ligase (876 aa).

4 residues coordinate Zn(2+): histidine 565, histidine 569, cysteine 667, and histidine 671.

Belongs to the class-II aminoacyl-tRNA synthetase family. The cofactor is Zn(2+).

The protein localises to the cytoplasm. The enzyme catalyses tRNA(Ala) + L-alanine + ATP = L-alanyl-tRNA(Ala) + AMP + diphosphate. Its function is as follows. Catalyzes the attachment of alanine to tRNA(Ala) in a two-step reaction: alanine is first activated by ATP to form Ala-AMP and then transferred to the acceptor end of tRNA(Ala). Also edits incorrectly charged Ser-tRNA(Ala) and Gly-tRNA(Ala) via its editing domain. This Staphylococcus aureus (strain MSSA476) protein is Alanine--tRNA ligase.